The primary structure comprises 68 residues: Beta-defensin 1 (68 aa).

Residues 1–21 (MRTSYLLLFTLCLLLSEMASG) form the signal peptide. Residues 22–32 (DNFLTGLGHRS) constitute a propeptide that is removed on maturation. Cystine bridges form between C37–C66, C44–C59, and C49–C67.

The protein belongs to the beta-defensin family. As to quaternary structure, monomer. Homodimer.

The protein resides in the secreted. It is found in the membrane. In terms of biological role, has bactericidal activity. May act as a ligand for C-C chemokine receptor CCR6. Positively regulates the sperm motility and bactericidal activity in a CCR6-dependent manner. Binds to CCR6 and triggers Ca2+ mobilization in the sperm which is important for its motility. This chain is Beta-defensin 1 (DEFB1), found in Cercopithecus erythrogaster (Red-bellied monkey).